Reading from the N-terminus, the 637-residue chain is Probable potassium transport system protein Kup 2 (637 aa).

12 consecutive transmembrane segments (helical) span residues 18–38, 61–81, 107–127, 145–165, 174–194, 211–231, 255–275, 293–313, 345–365, 371–391, 402–422, and 429–449; these read FLVLLLGSIGVVYGDIGTSPL, LISLMIWTLTIIVTFKYVLFL, MPVLFFAGLIGSALFIGDAMI, PAFSDYVLPLSALIMVGLFAV, AVFFGPITVVWFLAMAWGGLI, ALWFITHAGWAGLIVLGAVFL, WFILVFPALALNYLGQGALVL, ALFPMIILATMATVIASQAVI, IYVPAVNMVLFIGVLVLIFSF, LATAYGISVTGAMVVTTLMAF, AFTAAILLAPLFSIEAVFLAA, and DGGWVPLALAGVIILVMWTWT.

The protein belongs to the HAK/KUP transporter (TC 2.A.72) family.

The protein resides in the cell inner membrane. The enzyme catalyses K(+)(in) + H(+)(in) = K(+)(out) + H(+)(out). Functionally, transport of potassium into the cell. Likely operates as a K(+):H(+) symporter. This chain is Probable potassium transport system protein Kup 2, found in Agrobacterium fabrum (strain C58 / ATCC 33970) (Agrobacterium tumefaciens (strain C58)).